A 141-amino-acid chain; its full sequence is Large ribosomal subunit protein uL16 (141 aa).

Belongs to the universal ribosomal protein uL16 family. In terms of assembly, part of the 50S ribosomal subunit.

Functionally, binds 23S rRNA and is also seen to make contacts with the A and possibly P site tRNAs. The polypeptide is Large ribosomal subunit protein uL16 (Sulfurimonas denitrificans (strain ATCC 33889 / DSM 1251) (Thiomicrospira denitrificans (strain ATCC 33889 / DSM 1251))).